Consider the following 548-residue polypeptide: T-complex protein 1 subunit theta (548 aa).

Position 2 is an N-acetylalanine (A2). S23 is modified (phosphoserine). Y30 is modified (phosphotyrosine). ADP contacts are provided by Y47 and G48. A Mg(2+)-binding site is contributed by D99. ADP contacts are provided by G100, T101, N102, and F103. Positions 100, 101, and 102 each coordinate ATP. A Phosphoserine modification is found at S162. ADP-binding residues include M169, S170, and K171. 2 residues coordinate ATP: S170 and K171. At S213 the chain carries Phosphoserine. Glycyl lysine isopeptide (Lys-Gly) (interchain with G-Cter in SUMO2) cross-links involve residues K224, K254, and K260. Residues S269 and S317 each carry the phosphoserine modification. Residues K318 and K400 each carry the N6-acetyllysine modification. G412 contacts ADP. Residue G412 coordinates ATP. K459 is covalently cross-linked (Glycyl lysine isopeptide (Lys-Gly) (interchain with G-Cter in SUMO1)). Residue K466 is modified to N6-acetyllysine. D499 contributes to the ADP binding site. 2 residues coordinate ATP: D499 and K504. Phosphotyrosine is present on Y505. Positions 529–548 are disordered; that stretch reads PAGGPKPPSGKKDWDDDQND. K534 is covalently cross-linked (Glycyl lysine isopeptide (Lys-Gly) (interchain with G-Cter in SUMO2)). A Phosphoserine modification is found at S537. K539 is covalently cross-linked (Glycyl lysine isopeptide (Lys-Gly) (interchain with G-Cter in SUMO2)).

This sequence belongs to the TCP-1 chaperonin family. As to quaternary structure, component of the chaperonin-containing T-complex (TRiC), a hexadecamer composed of two identical back-to-back stacked rings enclosing a protein folding chamber. Each ring is made up of eight different subunits: TCP1/CCT1, CCT2, CCT3, CCT4, CCT5, CCT6A/CCT6, CCT7, CCT8. Interacts with PACRG. Interacts with DNAAF4. Interacts with synaptic plasticity regulator PANTS.

The protein localises to the cytoplasm. It localises to the cytoskeleton. It is found in the microtubule organizing center. Its subcellular location is the centrosome. The protein resides in the cilium basal body. The catalysed reaction is ATP + H2O = ADP + phosphate + H(+). Component of the chaperonin-containing T-complex (TRiC), a molecular chaperone complex that assists the folding of actin, tubulin and other proteins upon ATP hydrolysis. The TRiC complex mediates the folding of WRAP53/TCAB1, thereby regulating telomere maintenance. As part of the TRiC complex may play a role in the assembly of BBSome, a complex involved in ciliogenesis regulating transports vesicles to the cilia. The polypeptide is T-complex protein 1 subunit theta (CCT8) (Homo sapiens (Human)).